The chain runs to 882 residues: Protein translocase subunit SecA (882 aa).

Residues Gln79, 97 to 101, and Asp487 contribute to the ATP site; that span reads GEGKT.

This sequence belongs to the SecA family.

It is found in the plastid. Its subcellular location is the chloroplast stroma. It localises to the chloroplast thylakoid membrane. It catalyses the reaction ATP + H2O + cellular proteinSide 1 = ADP + phosphate + cellular proteinSide 2.. Functionally, has a central role in coupling the hydrolysis of ATP to the transfer of proteins across the thylakoid membrane. The protein is Protein translocase subunit SecA of Gracilaria tenuistipitata var. liui (Red alga).